Consider the following 151-residue polypeptide: Ribonuclease H (151 aa).

The RNase H type-1 domain occupies 1–146 (MSDLFAYTDG…ADELARAGMA (146 aa)). Residues Asp9, Glu52, Asp74, and Asp138 each contribute to the Mg(2+) site.

Belongs to the RNase H family. As to quaternary structure, monomer. It depends on Mg(2+) as a cofactor.

It localises to the cytoplasm. The enzyme catalyses Endonucleolytic cleavage to 5'-phosphomonoester.. Its function is as follows. Endonuclease that specifically degrades the RNA of RNA-DNA hybrids. The polypeptide is Ribonuclease H (Cereibacter sphaeroides (strain ATCC 17025 / ATH 2.4.3) (Rhodobacter sphaeroides)).